A 263-amino-acid chain; its full sequence is Purine nucleoside phosphorylase SERP0752 (263 aa).

Zn(2+) contacts are provided by histidine 79, cysteine 124, and histidine 141.

The protein belongs to the purine nucleoside phosphorylase YfiH/LACC1 family. In terms of assembly, homodimer. Requires Cu(2+) as cofactor. It depends on Zn(2+) as a cofactor.

It carries out the reaction adenosine + phosphate = alpha-D-ribose 1-phosphate + adenine. It catalyses the reaction S-methyl-5'-thioadenosine + phosphate = 5-(methylsulfanyl)-alpha-D-ribose 1-phosphate + adenine. The enzyme catalyses inosine + phosphate = alpha-D-ribose 1-phosphate + hypoxanthine. The catalysed reaction is adenosine + H2O + H(+) = inosine + NH4(+). Functionally, purine nucleoside enzyme that catalyzes the phosphorolysis of adenosine and inosine nucleosides, yielding D-ribose 1-phosphate and the respective free bases, adenine and hypoxanthine. Also catalyzes the phosphorolysis of S-methyl-5'-thioadenosine into adenine and S-methyl-5-thio-alpha-D-ribose 1-phosphate. Also has adenosine deaminase activity. In Staphylococcus epidermidis (strain ATCC 35984 / DSM 28319 / BCRC 17069 / CCUG 31568 / BM 3577 / RP62A), this protein is Purine nucleoside phosphorylase SERP0752.